A 382-amino-acid polypeptide reads, in one-letter code: Cysteine desulfurase IscS 1 (382 aa).

Asparagine 149 contributes to the pyridoxal 5'-phosphate binding site. Residue cysteine 321 is the Cysteine persulfide intermediate of the active site. Cysteine 321 is a binding site for [2Fe-2S] cluster.

The protein belongs to the class-V pyridoxal-phosphate-dependent aminotransferase family. NifS/IscS subfamily. Homodimer. Forms a heterotetramer with IscU, interacts with other sulfur acceptors. The cofactor is pyridoxal 5'-phosphate.

It is found in the cytoplasm. It catalyses the reaction (sulfur carrier)-H + L-cysteine = (sulfur carrier)-SH + L-alanine. It functions in the pathway cofactor biosynthesis; iron-sulfur cluster biosynthesis. In terms of biological role, master enzyme that delivers sulfur to a number of partners involved in Fe-S cluster assembly, tRNA modification or cofactor biosynthesis. Catalyzes the removal of elemental sulfur atoms from cysteine to produce alanine. Functions as a sulfur delivery protein for Fe-S cluster synthesis onto IscU, an Fe-S scaffold assembly protein, as well as other S acceptor proteins. The sequence is that of Cysteine desulfurase IscS 1 from Archaeoglobus fulgidus (strain ATCC 49558 / DSM 4304 / JCM 9628 / NBRC 100126 / VC-16).